A 154-amino-acid polypeptide reads, in one-letter code: Aspartate carbamoyltransferase regulatory chain (154 aa).

Cys109, Cys114, Cys138, and Cys141 together coordinate Zn(2+).

This sequence belongs to the PyrI family. As to quaternary structure, contains catalytic and regulatory chains. Zn(2+) is required as a cofactor.

Involved in allosteric regulation of aspartate carbamoyltransferase. This Photorhabdus laumondii subsp. laumondii (strain DSM 15139 / CIP 105565 / TT01) (Photorhabdus luminescens subsp. laumondii) protein is Aspartate carbamoyltransferase regulatory chain.